A 278-amino-acid polypeptide reads, in one-letter code: Cation-dependent mannose-6-phosphate receptor (278 aa).

An N-terminal signal peptide occupies residues 1 to 21 (MFPLSGCWRTELLLLLLLAVA). Topologically, residues 22 to 188 (VRESWQIEEK…ACSPEVSHLS (167 aa)) are lumenal. The region spanning 31–182 (KSCDLVGEKD…EMDSSLACSP (152 aa)) is the MRH domain. A disulfide bridge links Cys-33 with Cys-79. 5 N-linked (GlcNAc...) asparagine glycosylation sites follow: Asn-58, Asn-84, Asn-95, Asn-108, and Asn-114. 2 disulfides stabilise this stretch: Cys-133-Cys-168 and Cys-146-Cys-180. The helical transmembrane segment at 189-209 (VGSILLVIFASLVAVYIIGGF) threads the bilayer. At 210–278 (LYQRLVVGAK…EERDDHLLPM (69 aa)) the chain is on the cytoplasmic side. A disordered region spans residues 256-278 (YRGVGDDQLGEESEERDDHLLPM). At Ser-268 the chain carries Phosphoserine.

In terms of assembly, homodimer. Binds GGA1, GGA2 and GGA3.

The protein localises to the lysosome membrane. In terms of biological role, transport of phosphorylated lysosomal enzymes from the Golgi complex and the cell surface to lysosomes. Lysosomal enzymes bearing phosphomannosyl residues bind specifically to mannose-6-phosphate receptors in the Golgi apparatus and the resulting receptor-ligand complex is transported to an acidic prelyosomal compartment where the low pH mediates the dissociation of the complex. This is Cation-dependent mannose-6-phosphate receptor (M6pr) from Rattus norvegicus (Rat).